Here is a 449-residue protein sequence, read N- to C-terminus: Na(+)-translocating NADH-quinone reductase subunit A (449 aa).

This sequence belongs to the NqrA family. Composed of six subunits; NqrA, NqrB, NqrC, NqrD, NqrE and NqrF.

The enzyme catalyses a ubiquinone + n Na(+)(in) + NADH + H(+) = a ubiquinol + n Na(+)(out) + NAD(+). NQR complex catalyzes the reduction of ubiquinone-1 to ubiquinol by two successive reactions, coupled with the transport of Na(+) ions from the cytoplasm to the periplasm. NqrA to NqrE are probably involved in the second step, the conversion of ubisemiquinone to ubiquinol. The protein is Na(+)-translocating NADH-quinone reductase subunit A of Serratia proteamaculans (strain 568).